Here is a 106-residue protein sequence, read N- to C-terminus: ATP-dependent Clp protease adapter protein ClpS (106 aa).

Positions 1 to 22 are disordered; that stretch reads MNEYHNSLKSKESVKDERQQKL. The span at 9–20 shows a compositional bias: basic and acidic residues; sequence KSKESVKDERQQ.

This sequence belongs to the ClpS family. Binds to the N-terminal domain of the chaperone ClpA.

Functionally, involved in the modulation of the specificity of the ClpAP-mediated ATP-dependent protein degradation. The protein is ATP-dependent Clp protease adapter protein ClpS of Photorhabdus laumondii subsp. laumondii (strain DSM 15139 / CIP 105565 / TT01) (Photorhabdus luminescens subsp. laumondii).